A 334-amino-acid chain; its full sequence is Putative binding protein YtlA (334 aa).

The first 23 residues, 1–23 (MNRWLRLGFACVGSIFLMFALAA), serve as a signal peptide directing secretion. Cys24 carries N-palmitoyl cysteine lipidation. Cys24 carries S-diacylglycerol cysteine lipidation.

It belongs to the bacterial solute-binding protein SsuA/TauA family.

The protein localises to the cell membrane. This Bacillus subtilis (strain 168) protein is Putative binding protein YtlA (ytlA).